The following is a 73-amino-acid chain: MLILSRKTNQKIFIGDSIELTIIEIRGDQVKVGVEAPRSVKIFRQEVYEEIQRENRAASDSPWSPNSLPQLPV.

The tract at residues 54 to 73 is disordered; it reads ENRAASDSPWSPNSLPQLPV. Polar residues predominate over residues 61-73; the sequence is SPWSPNSLPQLPV.

The protein belongs to the CsrA/RsmA family. As to quaternary structure, homodimer; the beta-strands of each monomer intercalate to form a hydrophobic core, while the alpha-helices form wings that extend away from the core.

The protein localises to the cytoplasm. A translational regulator that binds mRNA to regulate translation initiation and/or mRNA stability. Usually binds in the 5'-UTR at or near the Shine-Dalgarno sequence preventing ribosome-binding, thus repressing translation. Its main target seems to be the major flagellin gene, while its function is anatagonized by FliW. The polypeptide is Translational regulator CsrA (Treponema pallidum (strain Nichols)).